Reading from the N-terminus, the 173-residue chain is Alpha-crystallin A chain (173 aa).

Met-1 carries the post-translational modification N-acetylmethionine. The required for complex formation with BFSP1 and BFSP2 stretch occupies residues 1–63 (MDIAIQHPWF…RTVLDSGISE (63 aa)). Residue Gln-6 is modified to Deamidated glutamine; partial. Ser-45 bears the Phosphoserine mark. Gln-50 is modified (deamidated glutamine; partial). A sHSP domain is found at 52 to 162 (LFRTVLDSGI…GHSERAIPVS (111 aa)). Lys-70 carries the post-translational modification N6-acetyllysine. A Deamidated glutamine; partial modification is found at Gln-90. N6-acetyllysine is present on Lys-99. Position 100 (His-100) interacts with Zn(2+). Asn-101 bears the Deamidated asparagine; partial mark. The Zn(2+) site is built by Glu-102 and His-107. Ser-122 is subject to Phosphoserine. Deamidated asparagine; partial is present on Asn-123. Residues 144–173 (PKIPSGVDAGHSERAIPVSREEKPSSAPSS) are disordered. Residues 153-167 (GHSERAIPVSREEKP) show a composition bias toward basic and acidic residues. His-154 contributes to the Zn(2+) binding site. Ser-162 carries O-linked (GlcNAc) serine glycosylation.

It belongs to the small heat shock protein (HSP20) family. As to quaternary structure, heteromer composed of three CRYAA and one CRYAB subunits. Inter-subunit bridging via zinc ions enhances stability, which is crucial as there is no protein turn over in the lens. Can also form homodimers and homotetramers (dimers of dimers) which serve as the building blocks of homooligomers. Within homooligomers, the zinc-binding motif is created from residues of 3 different molecules. His-100 and Glu-102 from one molecule are ligands of the zinc ion, and His-107 and His-154 residues from additional molecules complete the site with tetrahedral coordination geometry. Part of a complex required for lens intermediate filament formation composed of BFSP1, BFSP2 and CRYAA. In terms of processing, acetylation at Lys-70 may increase chaperone activity. Undergoes age-dependent proteolytical cleavage at the C-terminus.

It is found in the cytoplasm. The protein localises to the nucleus. Contributes to the transparency and refractive index of the lens. Acts as a chaperone, preventing aggregation of various proteins under a wide range of stress conditions. Required for the correct formation of lens intermediate filaments as part of a complex composed of BFSP1, BFSP2 and CRYAA. This chain is Alpha-crystallin A chain (CRYAA), found in Giraffa camelopardalis (Giraffe).